Consider the following 162-residue polypeptide: Caveolin-2 (162 aa).

At 1–86 (MGLETEKTDV…FEISKYVMYK (86 aa)) the chain is on the cytoplasmic side. The residue at position 19 (tyrosine 19) is a Phosphotyrosine; by SRC. A phosphoserine mark is found at serine 20 and serine 23. Tyrosine 27 carries the phosphotyrosine; by SRC modification. Phosphoserine is present on serine 36. The helical intramembrane region spans 87 to 107 (FLTVFLAIPLAFLAGILFATL). The Cytoplasmic segment spans residues 108–162 (SCLHIWIIMPFVKTCLMVLPSVQTIWKSVTDAIVAPLCTSIGRSFSSVSLQLSQD).

It belongs to the caveolin family. In terms of assembly, monomer or homodimer. Interacts with CAV1; the interaction forms a stable heterooligomeric complex that is required for targeting to lipid rafts and for caveolae formation. Tyrosine phosphorylated forms do not form heterooligomers with the Tyr-19-phosphorylated form existing as a monomer or dimer, and the Tyr-27-form as a monomer only. Interacts (tyrosine phosphorylated form) with the SH2 domain-containing proteins, RASA1, NCK1 and SRC. Interacts (tyrosine phosphorylated form) with INSR, the interaction (Tyr-27-phosphorylated form) is increased on insulin stimulation. Interacts (Tyr-19 phosphorylated form) with MAPK1 (phosphorylated form); the interaction, promoted by insulin, leads to nuclear location and MAPK1 activation. Interacts with STAT3; the interaction is increased on insulin-induced tyrosine phosphorylation leading to STAT activation. Post-translationally, phosphorylated on serine and tyrosine residues. CAV1 promotes phosphorylation on Ser-23 which then targets the complex to the plasma membrane, lipid rafts and caveolae. Phosphorylation on Ser-36 appears to modulate mitosis in endothelial cells. Phosphorylation on both Tyr-19 and Tyr-27 is required for insulin-induced 'Ser-727' phosphorylation of STAT3 and its activation. Phosphorylation on Tyr-19 is required for insulin-induced phosphorylation of MAPK1 and DNA binding of STAT3. Tyrosine phosphorylation is induced by both EGF and insulin (By. similarity).

The protein localises to the nucleus. It is found in the cytoplasm. It localises to the golgi apparatus membrane. The protein resides in the cell membrane. Its subcellular location is the membrane. The protein localises to the caveola. May act as a scaffolding protein within caveolar membranes. Interacts directly with G-protein alpha subunits and can functionally regulate their activity. Acts as an accessory protein in conjunction with CAV1 in targeting to lipid rafts and driving caveolae formation. The Ser-36 phosphorylated form has a role in modulating mitosis in endothelial cells. Positive regulator of cellular mitogenesis of the MAPK signaling pathway. Required for the insulin-stimulated nuclear translocation and activation of MAPK1 and STAT3, and the subsequent regulation of cell cycle progression. In Aotus nancymaae (Ma's night monkey), this protein is Caveolin-2 (CAV2).